The chain runs to 193 residues: Dirigent protein (193 aa).

Residues M1 to P29 form the signal peptide. A disulfide bridge links C40 with C192. N-linked (GlcNAc...) asparagine glycosylation is found at N59 and N129.

The protein belongs to the plant dirigent protein family. As to quaternary structure, homodimer. Expressed in rhizomes, stems, and leaves.

The protein resides in the secreted. It is found in the extracellular space. It localises to the apoplast. Its pathway is aromatic compound metabolism; phenylpropanoid biosynthesis. Functionally, dirigent proteins impart stereoselectivity on the phenoxy radical-coupling reaction, yielding optically active lignans from two molecules of coniferyl alcohol in the biosynthesis of lignans, flavonolignans, and alkaloids and thus plays a central role in plant secondary metabolism. Also involved in the biosynthesis of etoposide, a chemotherapeutic compound of the topoisomerase inhibitor family. The sequence is that of Dirigent protein from Sinopodophyllum hexandrum (Himalayan may apple).